A 134-amino-acid polypeptide reads, in one-letter code: Ribonuclease VapC1 (134 aa).

The region spanning 4–123 is the PINc domain; sequence IIDTSIIIAL…LNVKDFKRIQ (120 aa). Mg(2+)-binding residues include aspartate 6 and aspartate 97.

The protein belongs to the PINc/VapC protein family. Mg(2+) is required as a cofactor.

In terms of biological role, toxic component of a type II toxin-antitoxin (TA) system. Has ssRNase activity. Upon expression in E.coli inhibits growth in liquid culture; this toxic effect is neutralized by coexpression with cognate antitoxin VapB1. Its RNase activity is partially inhibited in vitro by VapB1. The chain is Ribonuclease VapC1 from Rickettsia felis (strain ATCC VR-1525 / URRWXCal2) (Rickettsia azadi).